The chain runs to 280 residues: MNILIKSAVKNFIVFSTALYTSFSFAQSKLAIVIDDVGYHLKEDAAIFAMPREISVAIIPAAPYARARNQEAKSQGRDILIHMPMQPVSAVKIEDGGLHLGMSAAQVNDRVNTAKNIVRDAIGMNNHMGSAATADPQLMTYLMTALQEKHLFFLDSRTIGKSVAGKIAKEQGVRSLDRHIFLDDSNEFADVQRQFKAAIHYARKHGSAIAIGHPRPNTIAVLQAGLRNLPEDIQLVGMGNLWRNEKVIPPKPFILLFSEVPAPTSIEPFEPVGLLRGIPK.

An N-terminal signal peptide occupies residues 1–26; the sequence is MNILIKSAVKNFIVFSTALYTSFSFA.

This sequence to E.coli YibQ.

This is an uncharacterized protein from Haemophilus influenzae (strain ATCC 51907 / DSM 11121 / KW20 / Rd).